A 336-amino-acid polypeptide reads, in one-letter code: tRNA N6-adenosine threonylcarbamoyltransferase (336 aa).

Fe cation contacts are provided by histidine 114 and histidine 118. Residues leucine 136–glycine 140, aspartate 169, glycine 182, aspartate 186, and asparagine 275 contribute to the substrate site. Residue aspartate 302 coordinates Fe cation.

The protein belongs to the KAE1 / TsaD family. It depends on Fe(2+) as a cofactor.

Its subcellular location is the cytoplasm. The enzyme catalyses L-threonylcarbamoyladenylate + adenosine(37) in tRNA = N(6)-L-threonylcarbamoyladenosine(37) in tRNA + AMP + H(+). Functionally, required for the formation of a threonylcarbamoyl group on adenosine at position 37 (t(6)A37) in tRNAs that read codons beginning with adenine. Is involved in the transfer of the threonylcarbamoyl moiety of threonylcarbamoyl-AMP (TC-AMP) to the N6 group of A37, together with TsaE and TsaB. TsaD likely plays a direct catalytic role in this reaction. This Streptococcus agalactiae serotype Ia (strain ATCC 27591 / A909 / CDC SS700) protein is tRNA N6-adenosine threonylcarbamoyltransferase.